The primary structure comprises 654 residues: NADPH-dependent diflavin oxidoreductase 1 (654 aa).

One can recognise a Flavodoxin-like domain in the interval 14 to 166; sequence ALVLYGSETG…TFIPWITDFR (153 aa). FMN is bound by residues 20 to 25, 75 to 78, and 113 to 122; these read SETGNA, STTG, and LGDSSYPKFN. The 251-residue stretch at 235 to 485 folds into the FAD-binding FR-type domain; the sequence is PDALTATLVE…QLQRGGLSSS (251 aa). FAD contacts are provided by residues Arg-389, 419–422, and 458–461; these read RQFS and GVCT. Residues Thr-500, 568-569, and 574-578 contribute to the NADP(+) site; these read SR and KIYVQ. Trp-654 provides a ligand contact to FAD.

Belongs to the NADPH-dependent diflavin oxidoreductase NDOR1 family. The protein in the N-terminal section; belongs to the flavodoxin family. It in the C-terminal section; belongs to the flavoprotein pyridine nucleotide cytochrome reductase family. As to quaternary structure, interacts with dre2; as part of the cytosolic iron-sulfur (Fe-S) protein assembly (CIA) machinery. The cofactor is FAD. FMN is required as a cofactor.

It is found in the cytoplasm. It localises to the mitochondrion. It catalyses the reaction 2 oxidized [2Fe-2S]-[protein] + NADPH = 2 reduced [2Fe-2S]-[protein] + NADP(+) + H(+). Its function is as follows. NADPH-dependent reductase which is a central component of the cytosolic iron-sulfur (Fe-S) protein assembly (CIA) machinery. Transfers electrons from NADPH via its FAD and FMN prosthetic groups to the [2Fe-2S] cluster of dre2, another key component of the CIA machinery. In turn, this reduced cluster provides electrons for assembly of cytosolic iron-sulfur cluster proteins. Positively controls H(2)O(2)-induced cell death. The sequence is that of NADPH-dependent diflavin oxidoreductase 1 from Aspergillus fumigatus (strain ATCC MYA-4609 / CBS 101355 / FGSC A1100 / Af293) (Neosartorya fumigata).